Consider the following 428-residue polypeptide: 3-phosphoshikimate 1-carboxyvinyltransferase (428 aa).

Residues Lys22, Ser23, and Arg27 each contribute to the 3-phosphoshikimate site. Phosphoenolpyruvate is bound at residue Lys22. Phosphoenolpyruvate contacts are provided by Gly98 and Arg126. Ser172, Ser173, Gln174, Ser200, Asp316, Asn339, and Lys343 together coordinate 3-phosphoshikimate. Residue Gln174 participates in phosphoenolpyruvate binding. The Proton acceptor role is filled by Asp316. The phosphoenolpyruvate site is built by Arg347, Arg389, and Lys414.

Belongs to the EPSP synthase family. In terms of assembly, monomer.

Its subcellular location is the cytoplasm. It carries out the reaction 3-phosphoshikimate + phosphoenolpyruvate = 5-O-(1-carboxyvinyl)-3-phosphoshikimate + phosphate. The protein operates within metabolic intermediate biosynthesis; chorismate biosynthesis; chorismate from D-erythrose 4-phosphate and phosphoenolpyruvate: step 6/7. In terms of biological role, catalyzes the transfer of the enolpyruvyl moiety of phosphoenolpyruvate (PEP) to the 5-hydroxyl of shikimate-3-phosphate (S3P) to produce enolpyruvyl shikimate-3-phosphate and inorganic phosphate. This is 3-phosphoshikimate 1-carboxyvinyltransferase from Psychromonas ingrahamii (strain DSM 17664 / CCUG 51855 / 37).